The chain runs to 501 residues: ATP synthase subunit alpha (501 aa).

ATP is bound at residue 169-176 (GDRQTGKT).

This sequence belongs to the ATPase alpha/beta chains family. F-type ATPases have 2 components, CF(1) - the catalytic core - and CF(0) - the membrane proton channel. CF(1) has five subunits: alpha(3), beta(3), gamma(1), delta(1), epsilon(1). CF(0) has three main subunits: a(1), b(2) and c(9-12). The alpha and beta chains form an alternating ring which encloses part of the gamma chain. CF(1) is attached to CF(0) by a central stalk formed by the gamma and epsilon chains, while a peripheral stalk is formed by the delta and b chains.

The protein localises to the cell membrane. It carries out the reaction ATP + H2O + 4 H(+)(in) = ADP + phosphate + 5 H(+)(out). Produces ATP from ADP in the presence of a proton gradient across the membrane. The alpha chain is a regulatory subunit. In Streptococcus pneumoniae serotype 2 (strain D39 / NCTC 7466), this protein is ATP synthase subunit alpha.